Reading from the N-terminus, the 495-residue chain is MKPHLKQWRQGMLCGVFAWGLFFVVIFLYFTDSSPAKPAPSSFSFLETRRLLPAQGRQRAIMGASEGLPEGADLRRGSPRGLPSGPLRTWAGDGFEREQEFLSVQTGRTSLSSFAPEDSAPGTSGRLFPGDPGPEGARPPRAAPGRRAKRGPRRQSLSARGEDGERLYSSMSRALLRRLWKGDASARMLHPRLQKAMGAYLRANKHGVRFRGRRASGRSRTELLCALRGRVQVRTLDGTEPPFSALGWRALVPPVPLSRLLPRRLRTCAVVTSAGAILNSSLGEEIDSHDAVLRFNSAPTRGYEKDVGNKTTVRIINSQILTNPSYHFMDSALYKDVILVAWDPAPYSANLNLWYKKPDYNLFTPYVQHRQRNPNQPFYILHPKFIWQLWDIIQENTKEKIQPNPPSSGFIGILLMMNLCGEVHVYEYVPSVRQTDLCHYHEPYHDAACTLGAYHPLLYEKLLVQRLNVGTHGDLHRKGKVVLPGLQAVRCPPGA.

Residues 1 to 10 (MKPHLKQWRQ) are Cytoplasmic-facing. The helical; Signal-anchor for type II membrane protein transmembrane segment at 11-31 (GMLCGVFAWGLFFVVIFLYFT) threads the bilayer. Residues 32 to 495 (DSSPAKPAPS…LQAVRCPPGA (464 aa)) lie on the Lumenal side of the membrane. Disordered stretches follow at residues 63-90 (GASE…LRTW) and 107-165 (GRTS…EDGE). Residues 134 to 143 (PEGARPPRAA) show a composition bias toward low complexity. Residues 144 to 153 (PGRRAKRGPR) show a composition bias toward basic residues. Disulfide bonds link Cys-225–Cys-491, Cys-268–Cys-420, and Cys-438–Cys-449. Asn-279 and Asn-309 each carry an N-linked (GlcNAc...) asparagine glycan.

Belongs to the glycosyltransferase 29 family.

The protein localises to the golgi apparatus. It localises to the golgi stack membrane. The catalysed reaction is a beta-D-galactoside + CMP-N-acetyl-beta-neuraminate = an N-acetyl-alpha-neuraminyl-(2-&gt;6)-beta-D-galactosyl derivative + CMP + H(+). Transfers sialic acid from the donor of substrate CMP-sialic acid to galactose containing acceptor substrates. Has alpha-2,6-sialyltransferase activity toward oligosaccharides that have the Gal-beta-1,4-GlcNAc sequence at the non-reducing end of their carbohydrate groups, but it has weak or no activities toward glycoproteins and glycolipids. The polypeptide is Beta-galactoside alpha-2,6-sialyltransferase 2 (ST6GAL2) (Bos taurus (Bovine)).